The following is a 211-amino-acid chain: Shikimate kinase (211 aa).

The span at 1-13 (MNASANLCAASAN) shows a compositional bias: low complexity. Positions 1–24 (MNASANLCAASANDPQPGDQEAAH) are disordered. 50–55 (GAGKTT) lines the ATP pocket. Thr-54 serves as a coordination point for Mg(2+). The substrate site is built by Asp-72, Arg-96, and Gly-118. Arg-156 serves as a coordination point for ATP. Arg-175 lines the substrate pocket.

This sequence belongs to the shikimate kinase family. As to quaternary structure, monomer. The cofactor is Mg(2+).

Its subcellular location is the cytoplasm. It catalyses the reaction shikimate + ATP = 3-phosphoshikimate + ADP + H(+). It participates in metabolic intermediate biosynthesis; chorismate biosynthesis; chorismate from D-erythrose 4-phosphate and phosphoenolpyruvate: step 5/7. Its function is as follows. Catalyzes the specific phosphorylation of the 3-hydroxyl group of shikimic acid using ATP as a cosubstrate. The sequence is that of Shikimate kinase from Bordetella parapertussis (strain 12822 / ATCC BAA-587 / NCTC 13253).